Reading from the N-terminus, the 129-residue chain is MSNIPAELKYSKEHEWLRKEADGTYTVGITEHAQELLGDMVFVDLPEVGATVSAGDDCAVAESVKAASDIYAPVSGEIVAVNDALSDSPELVNSEPYAGGWIFKIKASDESELESLLDATAYEALLEDE.

The region spanning 24-106 is the Lipoyl-binding domain; it reads TYTVGITEHA…YAGGWIFKIK (83 aa). Lys65 is subject to N6-lipoyllysine.

The protein belongs to the GcvH family. As to quaternary structure, the glycine cleavage system is composed of four proteins: P, T, L and H. The cofactor is (R)-lipoate.

Functionally, the glycine cleavage system catalyzes the degradation of glycine. The H protein shuttles the methylamine group of glycine from the P protein to the T protein. This Escherichia coli O45:K1 (strain S88 / ExPEC) protein is Glycine cleavage system H protein.